A 286-amino-acid polypeptide reads, in one-letter code: Ribonuclease Z (286 aa).

The Zn(2+) site is built by histidine 61, histidine 63, aspartate 65, histidine 66, histidine 153, aspartate 176, and histidine 240. Residue aspartate 65 is the Proton acceptor of the active site.

The protein belongs to the RNase Z family. Homodimer. It depends on Zn(2+) as a cofactor.

The catalysed reaction is Endonucleolytic cleavage of RNA, removing extra 3' nucleotides from tRNA precursor, generating 3' termini of tRNAs. A 3'-hydroxy group is left at the tRNA terminus and a 5'-phosphoryl group is left at the trailer molecule.. Zinc phosphodiesterase, which displays some tRNA 3'-processing endonuclease activity. Probably involved in tRNA maturation, by removing a 3'-trailer from precursor tRNA. This chain is Ribonuclease Z, found in Mycolicibacterium gilvum (strain PYR-GCK) (Mycobacterium gilvum (strain PYR-GCK)).